A 272-amino-acid polypeptide reads, in one-letter code: 3-methyl-2-oxobutanoate hydroxymethyltransferase (272 aa).

D54 and D93 together coordinate Mg(2+). 3-methyl-2-oxobutanoate is bound by residues 54 to 55 (DS), D93, and K123. E125 is a binding site for Mg(2+). E190 functions as the Proton acceptor in the catalytic mechanism.

The protein belongs to the PanB family. Homodecamer; pentamer of dimers. Requires Mg(2+) as cofactor.

The protein localises to the cytoplasm. It carries out the reaction 3-methyl-2-oxobutanoate + (6R)-5,10-methylene-5,6,7,8-tetrahydrofolate + H2O = 2-dehydropantoate + (6S)-5,6,7,8-tetrahydrofolate. The protein operates within cofactor biosynthesis; (R)-pantothenate biosynthesis; (R)-pantoate from 3-methyl-2-oxobutanoate: step 1/2. Catalyzes the reversible reaction in which hydroxymethyl group from 5,10-methylenetetrahydrofolate is transferred onto alpha-ketoisovalerate to form ketopantoate. This chain is 3-methyl-2-oxobutanoate hydroxymethyltransferase, found in Tropheryma whipplei (strain Twist) (Whipple's bacillus).